The sequence spans 240 residues: Uridylate kinase (240 aa).

13-16 (KASG) is a binding site for ATP. The segment at 21–26 (GSQGFG) is involved in allosteric activation by GTP. Gly-55 provides a ligand contact to UMP. ATP contacts are provided by Gly-56 and Arg-60. UMP is bound by residues Asp-75 and 136–143 (TGNPFFTT). Residues Thr-163, Gln-164, Tyr-169, and Asp-172 each contribute to the ATP site.

It belongs to the UMP kinase family. In terms of assembly, homohexamer.

It is found in the cytoplasm. The catalysed reaction is UMP + ATP = UDP + ADP. It functions in the pathway pyrimidine metabolism; CTP biosynthesis via de novo pathway; UDP from UMP (UMPK route): step 1/1. Its activity is regulated as follows. Allosterically activated by GTP. Inhibited by UTP. Its function is as follows. Catalyzes the reversible phosphorylation of UMP to UDP. This is Uridylate kinase from Brucella suis biovar 1 (strain 1330).